We begin with the raw amino-acid sequence, 64 residues long: Large ribosomal subunit protein uL29 (64 aa).

The protein belongs to the universal ribosomal protein uL29 family.

The sequence is that of Large ribosomal subunit protein uL29 (rpl29) from Methanothermobacter thermautotrophicus (strain ATCC 29096 / DSM 1053 / JCM 10044 / NBRC 100330 / Delta H) (Methanobacterium thermoautotrophicum).